The following is a 251-amino-acid chain: ATP synthase subunit a (251 aa).

7 helical membrane-spanning segments follow: residues 29–49 (FTQS…ITLV), 56–73 (LVPG…EFIA), 87–107 (FVPL…FGMI), 117–137 (IIVT…YGFM), 159–181 (LIVA…RLFA), 192–212 (IFAG…LSPL), and 218–238 (VAIT…FATL).

The protein belongs to the ATPase A chain family. As to quaternary structure, F-type ATPases have 2 components, CF(1) - the catalytic core - and CF(0) - the membrane proton channel. CF(1) has five subunits: alpha(3), beta(3), gamma(1), delta(1), epsilon(1). CF(0) has three main subunits: a(1), b(2) and c(9-12). The alpha and beta chains form an alternating ring which encloses part of the gamma chain. CF(1) is attached to CF(0) by a central stalk formed by the gamma and epsilon chains, while a peripheral stalk is formed by the delta and b chains.

It is found in the cell inner membrane. Key component of the proton channel; it plays a direct role in the translocation of protons across the membrane. The chain is ATP synthase subunit a from Methylobacterium sp. (strain 4-46).